The primary structure comprises 430 residues: Enolase (430 aa).

Gln164 serves as a coordination point for (2R)-2-phosphoglycerate. Catalysis depends on Glu206, which acts as the Proton donor. 3 residues coordinate Mg(2+): Asp243, Glu286, and Asp313. (2R)-2-phosphoglycerate contacts are provided by Lys338, Arg367, Ser368, and Lys389. Residue Lys338 is the Proton acceptor of the active site.

Belongs to the enolase family. Component of the RNA degradosome, a multiprotein complex involved in RNA processing and mRNA degradation. Mg(2+) serves as cofactor.

The protein resides in the cytoplasm. The protein localises to the secreted. It is found in the cell surface. The catalysed reaction is (2R)-2-phosphoglycerate = phosphoenolpyruvate + H2O. The protein operates within carbohydrate degradation; glycolysis; pyruvate from D-glyceraldehyde 3-phosphate: step 4/5. Catalyzes the reversible conversion of 2-phosphoglycerate (2-PG) into phosphoenolpyruvate (PEP). It is essential for the degradation of carbohydrates via glycolysis. In Dichelobacter nodosus (strain VCS1703A), this protein is Enolase.